Here is a 492-residue protein sequence, read N- to C-terminus: Cell death protein 6 (492 aa).

Residues 19-29 are compositionally biased toward low complexity; sequence GNNINGEGSSS. A disordered region spans residues 19-38; it reads GNNINGEGSSSPSTSAPQVK. Positions 55-215 constitute a PID domain; it reads INGHVEYVAR…YILKKKIVEL (161 aa). 2 disordered regions span residues 241 to 385 and 464 to 492; these read TGPP…STAA and TGDL…NLKQ. The segment covering 244–268 has biased composition (pro residues); it reads PIYPGLGPPALPLSPMPQGPPPNIP. Residues 300-312 show a composition bias toward low complexity; it reads ASPSVSPASTSPS. Positions 313-333 are enriched in pro residues; sequence GPAPSIPPPRPPALAPPPPVA. The span at 373–383 shows a compositional bias: basic and acidic residues; the sequence is FDPRAGEKKST.

This sequence belongs to the ced-6 family. As to quaternary structure, homodimer. Interacts with ced-1. Interacts with E3 ubiquitin-protein ligase trim-21. Detected in gonadal sheath cells.

The protein resides in the cytoplasm. May function as an adapter protein in a pathway that mediates recognition and phagocytosis of apoptotic cells during normal development. Promotes engulfment of cells at both early and late stages of apoptosis. Required for actin reorganization around apoptotic cells. Plays a role in protecting dopaminergic neurons from oxidative stress-induced degeneration. Mediates recruitment of E3 ubiquitin-protein ligase trim-21 to the apoptotic cell surface which promotes ubiquitination and degradation of ced-1. In Caenorhabditis elegans, this protein is Cell death protein 6.